The primary structure comprises 36 residues: Potassium channel toxin alpha-KTx 11.3 (36 aa).

Intrachain disulfides connect C8/C27, C13/C33, and C17/C35.

This sequence belongs to the short scorpion toxin superfamily. Potassium channel inhibitor family. Alpha-KTx 11 subfamily. In terms of tissue distribution, expressed by the venom gland.

The protein localises to the secreted. Functionally, binds and inhibits voltage-sensitive potassium channels. Inhibits the vertebrate potassium channel Kv1.1/KCNA1 with low affinity. The protein is Potassium channel toxin alpha-KTx 11.3 of Parabuthus granulatus (Granulated thick-tailed scorpion).